A 157-amino-acid polypeptide reads, in one-letter code: Small ribosomal subunit protein uS7 (157 aa).

This sequence belongs to the universal ribosomal protein uS7 family. Part of the 30S ribosomal subunit. Contacts proteins S9 and S11.

In terms of biological role, one of the primary rRNA binding proteins, it binds directly to 16S rRNA where it nucleates assembly of the head domain of the 30S subunit. Is located at the subunit interface close to the decoding center, probably blocks exit of the E-site tRNA. The sequence is that of Small ribosomal subunit protein uS7 from Herpetosiphon aurantiacus (strain ATCC 23779 / DSM 785 / 114-95).